We begin with the raw amino-acid sequence, 341 residues long: Muscleblind-like protein 1 (341 aa).

Thr-6 is modified (phosphothreonine). C3H1-type zinc fingers lie at residues 13 to 41 (WLTLEVCREFQRGTCSRPDTECKFAHPSK), 47 to 73 (NGRVIACFDSLKGRCSRENCKYLHPPP), 178 to 206 (TDRLEVCREYQRGNCNRGENDCRFAHPAD), and 214 to 240 (DNTVTVCMDYIKGRCSREKCKYFHPPA).

This sequence belongs to the muscleblind family. Interacts with DDX1 and YBX1. Interacts with HNRNPH1; the interaction in RNA-independent. Interacts with RBPMS; the interaction allows cooperative assembly of RNA-bound stable cell-specific alternative splicing regulatory complexes. As to expression, highly expressed in cardiac and skeletal muscle. Weakly expressed in heart and eye (at protein level).

It is found in the nucleus. Its subcellular location is the cytoplasm. The protein resides in the cytoplasmic granule. Functionally, mediates pre-mRNA alternative splicing regulation. Acts either as activator or repressor of splicing on specific pre-mRNA targets. Inhibits cardiac troponin-T (TNNT2) pre-mRNA exon inclusion but induces insulin receptor (IR) pre-mRNA exon inclusion in muscle. Antagonizes the alternative splicing activity pattern of CELF proteins. Regulates the TNNT2 exon 5 skipping through competition with U2AF2. Inhibits the formation of the spliceosome A complex on intron 4 of TNNT2 pre-mRNA. Binds to the stem-loop structure within the polypyrimidine tract of TNNT2 intron 4 during spliceosome assembly. Binds to the 5'-YGCU(U/G)Y-3'consensus sequence. Binds to the IR RNA. Binds to CUG triplet repeat expansion in myotonic dystrophy muscle cells by sequestering the target RNAs. Together with RNA binding proteins RBPMS and RBFOX2, activates vascular smooth muscle cells alternative splicing events. Regulates NCOR2 alternative splicing. The chain is Muscleblind-like protein 1 (Mbnl1) from Mus musculus (Mouse).